Reading from the N-terminus, the 72-residue chain is ATP synthase subunit c (72 aa).

The next 2 membrane-spanning stretches (helical) occupy residues 1–21 (MSLG…GAGI) and 48–68 (MFIG…FSFI).

Belongs to the ATPase C chain family. In terms of assembly, F-type ATPases have 2 components, F(1) - the catalytic core - and F(0) - the membrane proton channel. F(1) has five subunits: alpha(3), beta(3), gamma(1), delta(1), epsilon(1). F(0) has three main subunits: a(1), b(2) and c(10-14). The alpha and beta chains form an alternating ring which encloses part of the gamma chain. F(1) is attached to F(0) by a central stalk formed by the gamma and epsilon chains, while a peripheral stalk is formed by the delta and b chains.

The protein localises to the cell membrane. F(1)F(0) ATP synthase produces ATP from ADP in the presence of a proton or sodium gradient. F-type ATPases consist of two structural domains, F(1) containing the extramembraneous catalytic core and F(0) containing the membrane proton channel, linked together by a central stalk and a peripheral stalk. During catalysis, ATP synthesis in the catalytic domain of F(1) is coupled via a rotary mechanism of the central stalk subunits to proton translocation. In terms of biological role, key component of the F(0) channel; it plays a direct role in translocation across the membrane. A homomeric c-ring of between 10-14 subunits forms the central stalk rotor element with the F(1) delta and epsilon subunits. This Geobacillus stearothermophilus (Bacillus stearothermophilus) protein is ATP synthase subunit c.